Reading from the N-terminus, the 1770-residue chain is MESQQLSQNSPTFHGSAYASVTSKEVPSNQDPLAVSASNLPEFDRDSTKVNSQQETTPGTSAVPENHHHVSPQPASVPPPQNGQYQQHGMMTPNKAMASNWAHYQQPSMMTCSHYQTSPAYYQPDPHYPLPQYIPPLSTSSPDPIGSQDQHSEVPQAKTKVRNNVLPPHTLTSEENFSTWVKFYIRFLKNSNLGDIIPNDQGEIKRQMTYEEHAYIYNTFQAFAPFHLLPTWVKQILEINYSDILTVLCKSVSKMQTNNQELKDWIALANLEYNGSTSADTFEITVSTIIQRLKENNINVSDRLACQLILKGLSGDFKYLRNQYRTKTNMKLSQLFAEIQLIYDENKIMNLNKPSQYKQHSEYKNVSRTSPNTTNTKVTTRNYHRTNSSKPRAAKAHNIATSSKFSRVNNDHINESTVSSQYLSDDNELSLGQQQKESKPTRTIDSNDELPDHLLIDSGASQTLVRSAHYLHHATPNSEINIVDAQKQDIPINAIGNLHFNFQNGTKTSIKALHTPNIAYDLLSLSELANQNITACFTRNTLERSDGTVLAPIVKHGDFYWLSKKYLIPSHISKLTINNVNKSKSVNKYPYPLIHRMLGHANFRSIQKSLKKNAVTYLKESDIEWSNASTYQCPDCLIGKSTKHRHVKGSRLKYQESYEPFQYLHTDIFGPVHHLPKSAPSYFISFTDEKTRFQWVYPLHDRREESILNVFTSILAFIKNQFNARVLVIQMDRGSEYTNKTLHKFFTNRGITACYTTTADSRAHGVAERLNRTLLNDCRTLLHCSGLPNHLWFSAVEFSTIIRNSLVSPKNDKSARQHAGLAGLDITTILPFGQPVIVNNHNPDSKIHPRGIPGYALHPSRNSYGYIIYLPSLKKTVDTTNYVILQNKQTKLDQFDYDTLTFDDDLNRLTAHNQSFIEQNETEQSYDQNTESDHDYQSEIEINSDPLVNDFSSQSLNPLQLDKEPVQKVRAPKEVDADISEYNILPSTIRSRTPHIINKESTEMGGTIESDTTSPRHSSTFTARNQKRPGSPNDMIDLTSQDRVNYGLENIKTTRLGGTEEPYIQRNSDTNIKYRTTNSTPSIDDRSSNSESTTPIISIETKAACDNTPSIDTDPPEYRSSDHATPNIMPDKSSKNVTADSILDDLPLPDLTHQSPTDTSDVSKDIPHIHSRQTNSSLGGMDDSNVLTTTKSKKRSLEDNETEIEVSRDTWNNKNMRSLEPPRSKKRINLIAAIKGVKSIKPVRTTLRYDEAITYNKDNKEKDRYVEAYHKEISQLLKMNTWDTNKYYDRNDIDPKKVINSMFIFNKKRDGTHKARFVARGDIQHPDTYDSDMQSNTVHHYALMTSLSIALDNDYYITQLDISSAYLYADIKEELYIRPPPHLGLNDKLLRLRKSLYGLKQSGANWYETIKSYLINCCDMQEVRGWSCVFKNSQVTICLFVDDMILFSKDLNANKKIITTLKKQYDTKIINLGEGDNEIQYDILGLEIKYQRSKYMKLGMEKSLTEKLPKLNVPLNPKGKKLRAPGQPGHYIDQDELEIDEDEYKEKVHEMQKLIGLASYVGYKFRFDLLYYINTLAQHILFPSRQVLDMTYELIQFMWDTRDKQLIWHKNKPTKPDNKLVAISDASYGNQPYYKSQIGNIFLLNGKVIGGKSTKASLTCTSTTEAEIHAVSEAIPLLNNLSHLVQELNKKPIIKGLLTDSRSTISIIKSTNEEKFRNRFFGTKAMRLRDEVSGNNLYVYYIETNKNIADVMTKPLPIKTFKLLTNKWIH.

Polar residues-rich tracts occupy residues 1–39 (MESQQLSQNSPTFHGSAYASVTSKEVPSNQDPLAVSASN) and 49–60 (KVNSQQETTPGT). 2 disordered regions span residues 1 to 88 (MESQ…YQQH) and 359 to 449 (QHSE…SNDE). An RNA-binding region spans residues 295–397 (ENNINVSDRL…SSKPRAAKAH (103 aa)). Residues 369–381 (TSPNTTNTKVTTR) show a composition bias toward low complexity. Composition is skewed to polar residues over residues 399–408 (IATSSKFSRV) and 415–435 (ESTVSSQYLSDDNELSLGQQQ). Residue aspartate 457 is the For protease activity; shared with dimeric partner of the active site. The integrase-type zinc finger-like stretch occupies residues 579–636 (NVNKSKSVNKYPYPLIHRMLGHANFRSIQKSLKKNAVTYLKESDIEWSNASTYQCPDC). The region spanning 656–831 (ESYEPFQYLH…AGLDITTILP (176 aa)) is the Integrase catalytic domain. Aspartate 667 and aspartate 732 together coordinate Mg(2+). Polar residues-rich tracts occupy residues 916-929 (FIEQNETEQSYDQN), 1009-1024 (ESDTTSPRHSSTFTAR), and 1065-1082 (QRNSDTNIKYRTTNSTPS). Disordered stretches follow at residues 916–935 (FIEQNETEQSYDQNTESDHD), 1005–1038 (GGTIESDTTSPRHSSTFTARNQKRPGSPNDMIDL), and 1057–1205 (GGTE…TEIE). The Bipartite nuclear localization signal motif lies at 1193-1227 (KKRSLEDNETEIEVSRDTWNNKNMRSLEPPRSKKR). In terms of domain architecture, Reverse transcriptase Ty1/copia-type spans 1353 to 1491 (NDYYITQLDI…DILGLEIKYQ (139 aa)). Residues aspartate 1361, aspartate 1442, aspartate 1443, aspartate 1625, glutamate 1667, and aspartate 1700 each contribute to the Mg(2+) site. One can recognise an RNase H Ty1/copia-type domain in the interval 1625–1767 (DASYGNQPYY…IKTFKLLTNK (143 aa)).

The capsid protein forms a homotrimer, from which the VLPs are assembled. The protease is a homodimer, whose active site consists of two apposed aspartic acid residues. Post-translationally, initially, virus-like particles (VLPs) are composed of the structural unprocessed proteins Gag and Gag-Pol, and also contain the host initiator methionine tRNA (tRNA(i)-Met) which serves as a primer for minus-strand DNA synthesis, and a dimer of genomic Ty RNA. Processing of the polyproteins occurs within the particle and proceeds by an ordered pathway, called maturation. First, the protease (PR) is released by autocatalytic cleavage of the Gag-Pol polyprotein, and this cleavage is a prerequisite for subsequent processing at the remaining sites to release the mature structural and catalytic proteins. Maturation takes place prior to the RT reaction and is required to produce transposition-competent VLPs.

The protein resides in the cytoplasm. It localises to the nucleus. The catalysed reaction is DNA(n) + a 2'-deoxyribonucleoside 5'-triphosphate = DNA(n+1) + diphosphate. It carries out the reaction Endonucleolytic cleavage to 5'-phosphomonoester.. In terms of biological role, capsid protein (CA) is the structural component of the virus-like particle (VLP), forming the shell that encapsulates the retrotransposons dimeric RNA genome. The particles are assembled from trimer-clustered units and there are holes in the capsid shells that allow for the diffusion of macromolecules. CA also has nucleocapsid-like chaperone activity, promoting primer tRNA(i)-Met annealing to the multipartite primer-binding site (PBS), dimerization of Ty2 RNA and initiation of reverse transcription. Functionally, the aspartyl protease (PR) mediates the proteolytic cleavages of the Gag and Gag-Pol polyproteins after assembly of the VLP. Reverse transcriptase/ribonuclease H (RT) is a multifunctional enzyme that catalyzes the conversion of the retro-elements RNA genome into dsDNA within the VLP. The enzyme displays a DNA polymerase activity that can copy either DNA or RNA templates, and a ribonuclease H (RNase H) activity that cleaves the RNA strand of RNA-DNA heteroduplexes during plus-strand synthesis and hydrolyzes RNA primers. The conversion leads to a linear dsDNA copy of the retrotransposon that includes long terminal repeats (LTRs) at both ends. Its function is as follows. Integrase (IN) targets the VLP to the nucleus, where a subparticle preintegration complex (PIC) containing at least integrase and the newly synthesized dsDNA copy of the retrotransposon must transit the nuclear membrane. Once in the nucleus, integrase performs the integration of the dsDNA into the host genome. The protein is Transposon Ty2-OR1 Gag-Pol polyprotein (TY2B-OR1) of Saccharomyces cerevisiae (strain ATCC 204508 / S288c) (Baker's yeast).